The sequence spans 239 residues: Tetrahydromethanopterin S-methyltransferase subunit A (239 aa).

The Cytoplasmic segment spans residues 1 to 215; the sequence is MANKKSPAAT…EAAMIAKFNS (215 aa). His-85 contacts 5-hydroxybenzimidazolylcob(I)amide. The chain crosses the membrane as a helical span at residues 216–238; sequence GYYNGKIQGIAIGLFLSILVFSL. Leu-239 is a topological domain (extracellular).

This sequence belongs to the MtrA family. As to quaternary structure, the complex is composed of 8 subunits; MtrA, MtrB, MtrC, MtrD, MtrE, MtrF, MtrG and MtrH. It depends on 5-hydroxybenzimidazolylcob(I)amide as a cofactor.

The protein localises to the cell membrane. The enzyme catalyses 5-methyl-5,6,7,8-tetrahydromethanopterin + coenzyme M + 2 Na(+)(in) = 5,6,7,8-tetrahydromethanopterin + methyl-coenzyme M + 2 Na(+)(out). The protein operates within one-carbon metabolism; methanogenesis from CO(2); methyl-coenzyme M from 5,10-methylene-5,6,7,8-tetrahydromethanopterin: step 2/2. Part of a complex that catalyzes the formation of methyl-coenzyme M and tetrahydromethanopterin from coenzyme M and methyl-tetrahydromethanopterin. This is an energy-conserving, sodium-ion translocating step. The sequence is that of Tetrahydromethanopterin S-methyltransferase subunit A from Methanococcus maripaludis (strain C7 / ATCC BAA-1331).